Consider the following 270-residue polypeptide: Hemin import ATP-binding protein HmuV (270 aa).

The 238-residue stretch at 5–242 (LEAEAATYSV…SLINRVFDIE (238 aa)) folds into the ABC transporter domain. 37-44 (GPNGAGKS) contacts ATP.

Belongs to the ABC transporter superfamily. Heme (hemin) importer (TC 3.A.1.14.5) family. The complex is composed of two ATP-binding proteins (HmuV), two transmembrane proteins (HmuU) and a solute-binding protein (HmuT).

Its subcellular location is the cell inner membrane. Its function is as follows. Part of the ABC transporter complex HmuTUV involved in hemin import. Responsible for energy coupling to the transport system. The protein is Hemin import ATP-binding protein HmuV of Rhodopseudomonas palustris (strain BisA53).